The following is a 131-amino-acid chain: Profilin-1 (131 aa).

It belongs to the profilin family. Occurs in many kinds of cells as a complex with monomeric actin in a 1:1 ratio.

It localises to the cytoplasm. The protein resides in the cytoskeleton. Functionally, binds to actin and affects the structure of the cytoskeleton. At high concentrations, profilin prevents the polymerization of actin, whereas it enhances it at low concentrations. By binding to PIP2, it inhibits the formation of IP3 and DG. The polypeptide is Profilin-1 (Ambrosia artemisiifolia (Common ragweed)).